A 270-amino-acid polypeptide reads, in one-letter code: 3-methyl-2-oxobutanoate hydroxymethyltransferase (270 aa).

Residues Asp42 and Asp86 each coordinate Mg(2+). 3-methyl-2-oxobutanoate is bound by residues 42–43 (DS), Asp86, and Lys116. Mg(2+) is bound at residue Glu118. The active-site Proton acceptor is the Glu185.

The protein belongs to the PanB family. In terms of assembly, homodecamer; pentamer of dimers. It depends on Mg(2+) as a cofactor.

It is found in the cytoplasm. It carries out the reaction 3-methyl-2-oxobutanoate + (6R)-5,10-methylene-5,6,7,8-tetrahydrofolate + H2O = 2-dehydropantoate + (6S)-5,6,7,8-tetrahydrofolate. The protein operates within cofactor biosynthesis; (R)-pantothenate biosynthesis; (R)-pantoate from 3-methyl-2-oxobutanoate: step 1/2. Functionally, catalyzes the reversible reaction in which hydroxymethyl group from 5,10-methylenetetrahydrofolate is transferred onto alpha-ketoisovalerate to form ketopantoate. The chain is 3-methyl-2-oxobutanoate hydroxymethyltransferase from Synechococcus sp. (strain CC9902).